Here is a 581-residue protein sequence, read N- to C-terminus: Sabinene synthase 1, chloroplastic (581 aa).

A chloroplast-targeting transit peptide spans 1 to 28; that stretch reads MPLNSLHNLERKPSKAWSTSCTAPAARL. Positions 297, 334, 338, 475, and 478 each coordinate (2E)-geranyl diphosphate. Residues aspartate 334 and aspartate 338 each coordinate Mg(2+). A DDXXD motif motif is present at residues 334–338; sequence DDVYD. The Mg(2+) site is built by aspartate 478, threonine 482, and glutamate 486.

The protein belongs to the terpene synthase family. Tpsb subfamily. Mg(2+) serves as cofactor. It depends on Mn(2+) as a cofactor.

The protein localises to the plastid. It localises to the chloroplast. It catalyses the reaction (2E)-geranyl diphosphate = sabinene + diphosphate. The enzyme catalyses (2E)-geranyl diphosphate = beta-myrcene + diphosphate. Its pathway is secondary metabolite biosynthesis; terpenoid biosynthesis. Monoterpene synthase (TPS) involved in the biosynthesis of monoterpene natural products, components of the chemical defense arsenal. Catalyzes the conversion of (2E)-geranyl diphosphate (GPP) into sabinene, and, as minor products, myrcene. This chain is Sabinene synthase 1, chloroplastic, found in Salvia pomifera (Apple sage).